We begin with the raw amino-acid sequence, 155 residues long: MRCPFCGNVDTQVKDSRPAEDHVAIRRRRFCPACGGRFTTYERVQLRDLVVIKSSGKREDFDRDKLERSIRIAMQKRPVEPDRLDQMISGIVRRLESMGETDIPSATIGEIVMEALARIDTVGYVRFASVYKNFQAADDFDKFVSELRPPTGKDS.

A zinc finger spans residues 3–34 (CPFCGNVDTQVKDSRPAEDHVAIRRRRFCPAC). One can recognise an ATP-cone domain in the interval 49–139 (LVVIKSSGKR…VYKNFQAADD (91 aa)).

Belongs to the NrdR family. Zn(2+) is required as a cofactor.

Negatively regulates transcription of bacterial ribonucleotide reductase nrd genes and operons by binding to NrdR-boxes. The polypeptide is Transcriptional repressor NrdR (Dinoroseobacter shibae (strain DSM 16493 / NCIMB 14021 / DFL 12)).